Reading from the N-terminus, the 132-residue chain is Small ribosomal subunit protein uS8 (132 aa).

This sequence belongs to the universal ribosomal protein uS8 family. Part of the 30S ribosomal subunit. Contacts proteins S5 and S12.

Its function is as follows. One of the primary rRNA binding proteins, it binds directly to 16S rRNA central domain where it helps coordinate assembly of the platform of the 30S subunit. The chain is Small ribosomal subunit protein uS8 from Mycobacterium marinum (strain ATCC BAA-535 / M).